A 500-amino-acid polypeptide reads, in one-letter code: Aspartyl/glutamyl-tRNA(Asn/Gln) amidotransferase subunit B (500 aa).

This sequence belongs to the GatB/GatE family. GatB subfamily. As to quaternary structure, heterotrimer of A, B and C subunits.

It carries out the reaction L-glutamyl-tRNA(Gln) + L-glutamine + ATP + H2O = L-glutaminyl-tRNA(Gln) + L-glutamate + ADP + phosphate + H(+). It catalyses the reaction L-aspartyl-tRNA(Asn) + L-glutamine + ATP + H2O = L-asparaginyl-tRNA(Asn) + L-glutamate + ADP + phosphate + 2 H(+). In terms of biological role, allows the formation of correctly charged Asn-tRNA(Asn) or Gln-tRNA(Gln) through the transamidation of misacylated Asp-tRNA(Asn) or Glu-tRNA(Gln) in organisms which lack either or both of asparaginyl-tRNA or glutaminyl-tRNA synthetases. The reaction takes place in the presence of glutamine and ATP through an activated phospho-Asp-tRNA(Asn) or phospho-Glu-tRNA(Gln). The protein is Aspartyl/glutamyl-tRNA(Asn/Gln) amidotransferase subunit B of Brucella anthropi (strain ATCC 49188 / DSM 6882 / CCUG 24695 / JCM 21032 / LMG 3331 / NBRC 15819 / NCTC 12168 / Alc 37) (Ochrobactrum anthropi).